The sequence spans 1050 residues: MNTNRRSRSPDEEALEEDQHQYGAGTLSLEELDEHFPNRPRNHSKTFPFSDLFRTLFNPLIDCKPSTSGGTVRGPKPGRGGHFSKVSYHEQRRHIIERFMSRWRSEVGNDFYPAMRLILPDKDRDRGVYGLKENTIGKLLVKVMKIDRNSEDGYNLMHWKLPGGQSGVSRSVGDFAGRCLEVVSKRAMRAQPGDLTIADVNVLLDRLAAASGEAEQLPIFEEFYRQMNAEEMMWLVRIILKDMRVGATERTFLNLWHPDAEALFSVSSSLRRVCWELFDPEFRLEQQETGIKLMQCFQPQLAQFQMTTTWEKLVKNLGVTEENPEFWIEEKLDGERMQMHMIEDDTVPGGFRFAFWSRKAKDYTYLYGESLGDEQSALTRHLHKAFDDGVRNLILDGEMITWDIDIDKMVPFGTLKTAALEQQKNPSKAGPRPLYRVFDILLLNDKPLTEYTLNDRRRALERAVVGVHRRLEILPFERATSPDAIEPLLRRVVAEASEGLVLKNPRSRYSLNSRNNDWIKVKPEYMSDFGESLDCVVVGGYFGSGRRGGTLSSFLCGVRVSQNFIKSGNASAEKCLSFVKVGGGFKAEDYAEIRHHTEGKWQDWDPSSPPTEYIELGGGEKLQYEKPDVWIRPSDSVVISVKAASITQSDQFAMGWTLRFPRFRKLRLDRAWDSALDMDEFEVLRSKIKDQEQERKKMEMENRKRKPATKRARKDLVIAGMSDPSSSSAATPVIAPKETREASKRLFEGLDFCVLSDSLKPNKMTKPALEKLIKDHGGRIHQQVMDHSGQGKIIIPIADKNVIKVASLRKANPEMDIIRPKWIFDCLVQPMPFTKQKENKKGYLLPFEPTHLFHSGSEETSEEAEQAVDKFGDSYAGDLADINELKAIMEGMESDDYVSDSDWDSDSGRGRGGGDGFDMNHFLDHLEEQGTSLDDLRSFMFRRCRVFFALPSAGNGDGAAESKALRLKNYIRFGNGKVVDELETATHVVVVTAPLGESSKKEEREIAAELRYKISLREMGSPMPRIVKGEWVEDSWKEGTVVDEEEYVAG.

The interval 1–22 (MNTNRRSRSPDEEALEEDQHQY) is disordered. 10 residues coordinate ATP: glutamate 329, lysine 331, leucine 332, arginine 336, glutamate 398, phenylalanine 438, glutamate 498, lysine 503, lysine 520, and lysine 522. Lysine 331 functions as the N6-AMP-lysine intermediate in the catalytic mechanism. Residue glutamate 398 participates in Mg(2+) binding. Residue glutamate 498 coordinates Mg(2+). A compositionally biased stretch (basic and acidic residues) spans 691–702 (QEQERKKMEMEN). The tract at residues 691–711 (QEQERKKMEMENRKRKPATKR) is disordered. BRCT domains are found at residues 742–840 (ASKR…KENK) and 936–1049 (LRSF…EYVA).

It belongs to the ATP-dependent DNA ligase family. Mg(2+) is required as a cofactor.

It localises to the nucleus. The catalysed reaction is ATP + (deoxyribonucleotide)n-3'-hydroxyl + 5'-phospho-(deoxyribonucleotide)m = (deoxyribonucleotide)n+m + AMP + diphosphate.. In terms of biological role, DNA ligase involved in DNA non-homologous end joining (NHEJ); required for double-strand break (DSB) repair. The sequence is that of DNA ligase 4 (mus-53) from Neurospora crassa (strain ATCC 24698 / 74-OR23-1A / CBS 708.71 / DSM 1257 / FGSC 987).